Reading from the N-terminus, the 165-residue chain is Phosphopantetheine adenylyltransferase (165 aa).

Thr10 serves as a coordination point for substrate. Residues 10–11 (TF) and His18 contribute to the ATP site. The substrate site is built by Lys42, Leu75, and Arg89. Residues 90-92 (GVR), Glu100, and 125-131 (VSFISSS) each bind ATP.

Belongs to the bacterial CoaD family. In terms of assembly, homohexamer. Mg(2+) is required as a cofactor.

The protein localises to the cytoplasm. It carries out the reaction (R)-4'-phosphopantetheine + ATP + H(+) = 3'-dephospho-CoA + diphosphate. The protein operates within cofactor biosynthesis; coenzyme A biosynthesis; CoA from (R)-pantothenate: step 4/5. Reversibly transfers an adenylyl group from ATP to 4'-phosphopantetheine, yielding dephospho-CoA (dPCoA) and pyrophosphate. The protein is Phosphopantetheine adenylyltransferase of Buchnera aphidicola subsp. Schizaphis graminum (strain Sg).